The following is a 1122-amino-acid chain: Receptor-type guanylate cyclase gcy-5 (1122 aa).

The signal sequence occupies residues 1–19 (MRLLYFSMVLLWVLGASEC). Topologically, residues 20-486 (QVIPSSRRTL…CPVQFWDQYG (467 aa)) are extracellular. Residues asparagine 252, asparagine 299, asparagine 344, asparagine 350, asparagine 378, asparagine 434, and asparagine 439 are each glycosylated (N-linked (GlcNAc...) asparagine). Residues 487–507 (VLIFVASIVLIFLICIMLMCF) traverse the membrane as a helical segment. Topologically, residues 508–1122 (GFMIRGRRAE…KSKMDTLKVV (615 aa)) are cytoplasmic. The disordered stretch occupies residues 536–562 (QKEKRKPNSRRSLQSGPSTITGESKMT). Residues 542-830 (PNSRRSLQSG…NTNLMDHVFN (289 aa)) enclose the Protein kinase domain. A compositionally biased stretch (polar residues) spans 545-559 (RRSLQSGPSTITGES). One can recognise a Guanylate cyclase domain in the interval 888 to 1018 (TVLFSDVVKF…DTVNTASRME (131 aa)). Positions 1071 to 1122 (SDTKSLSTRTTPPITDENWPPQMKEDLKKRAVTPYPERQRSGKSKMDTLKVV) are disordered. Residues 1074–1083 (KSLSTRTTPP) are compositionally biased toward polar residues. Residues 1107-1122 (ERQRSGKSKMDTLKVV) are compositionally biased toward basic and acidic residues.

It belongs to the adenylyl cyclase class-4/guanylyl cyclase family. Expressed in both ASEL and ASER neurons during early embryonic stages and becomes specifically expressed in ASER neuron in early larval stage.

It localises to the cell membrane. The enzyme catalyses GTP = 3',5'-cyclic GMP + diphosphate. Its function is as follows. Guanylate cyclase involved in the production of the second messenger cGMP. Unlike other guanylate cyclases expressed in ASE neurons, may not play a role in chemotaxis responses to salt ions mediated by ASE sensory neurons. The chain is Receptor-type guanylate cyclase gcy-5 from Caenorhabditis elegans.